The following is a 455-amino-acid chain: Keratin, type I cuticular Ha5 (455 aa).

Residues 1–97 (MASKCLKAGF…FGEGILTGNE (97 aa)) form a head region. One can recognise an IF rod domain in the interval 97–408 (EKETMQSLND…GLLESEDSKL (312 aa)). The coil 1A stretch occupies residues 98–132 (KETMQSLNDRLAGYLEKVRQLEQENASLESRIREW). The tract at residues 133–143 (CEQQVPYMCPD) is linker 1. The coil 1B stretch occupies residues 144–244 (YQSYFRTIEE…HEEEVNSLRC (101 aa)). The interval 245–260 (QLGDRLNVEVDAAPPV) is linker 12. Residues 261 to 404 (DLNRVLEEMR…NTYRGLLESE (144 aa)) are coil 2. A tail region spans residues 405–455 (DSKLPCNPCAPDYSPSKSCLPCLPAASCGPSAARTNCSPRPICVPCPGGRF).

The protein belongs to the intermediate filament family. Early expression in the hair follicle, mainly found in supramatricial cells and lowermost cortical cells of the hair bulb.

The protein is Keratin, type I cuticular Ha5 (KRT35) of Homo sapiens (Human).